A 338-amino-acid polypeptide reads, in one-letter code: Holliday junction branch migration complex subunit RuvB (338 aa).

The large ATPase domain (RuvB-L) stretch occupies residues 1–181 (MDRIVEIEKV…FGMDFRLQFY (181 aa)). Residues L20, R21, G62, K65, T66, T67, 128-130 (EDF), R171, Y181, and R218 each bind ATP. T66 contributes to the Mg(2+) binding site. The segment at 182–252 (STAELSRIIQ…RAKEGLNALG (71 aa)) is small ATPAse domain (RuvB-S). The segment at 255-338 (SLGFDEMDIK…NRTKGLFDGE (84 aa)) is head domain (RuvB-H). The DNA site is built by R309 and R314.

It belongs to the RuvB family. Homohexamer. Forms an RuvA(8)-RuvB(12)-Holliday junction (HJ) complex. HJ DNA is sandwiched between 2 RuvA tetramers; dsDNA enters through RuvA and exits via RuvB. An RuvB hexamer assembles on each DNA strand where it exits the tetramer. Each RuvB hexamer is contacted by two RuvA subunits (via domain III) on 2 adjacent RuvB subunits; this complex drives branch migration. In the full resolvosome a probable DNA-RuvA(4)-RuvB(12)-RuvC(2) complex forms which resolves the HJ.

It localises to the cytoplasm. The catalysed reaction is ATP + H2O = ADP + phosphate + H(+). Its function is as follows. The RuvA-RuvB-RuvC complex processes Holliday junction (HJ) DNA during genetic recombination and DNA repair, while the RuvA-RuvB complex plays an important role in the rescue of blocked DNA replication forks via replication fork reversal (RFR). RuvA specifically binds to HJ cruciform DNA, conferring on it an open structure. The RuvB hexamer acts as an ATP-dependent pump, pulling dsDNA into and through the RuvAB complex. RuvB forms 2 homohexamers on either side of HJ DNA bound by 1 or 2 RuvA tetramers; 4 subunits per hexamer contact DNA at a time. Coordinated motions by a converter formed by DNA-disengaged RuvB subunits stimulates ATP hydrolysis and nucleotide exchange. Immobilization of the converter enables RuvB to convert the ATP-contained energy into a lever motion, pulling 2 nucleotides of DNA out of the RuvA tetramer per ATP hydrolyzed, thus driving DNA branch migration. The RuvB motors rotate together with the DNA substrate, which together with the progressing nucleotide cycle form the mechanistic basis for DNA recombination by continuous HJ branch migration. Branch migration allows RuvC to scan DNA until it finds its consensus sequence, where it cleaves and resolves cruciform DNA. The chain is Holliday junction branch migration complex subunit RuvB from Campylobacter curvus (strain 525.92).